A 125-amino-acid polypeptide reads, in one-letter code: UPF0251 protein DSY3441 (125 aa).

The protein belongs to the UPF0251 family.

The chain is UPF0251 protein DSY3441 from Desulfitobacterium hafniense (strain Y51).